Reading from the N-terminus, the 247-residue chain is Uridylate kinase (247 aa).

14–17 (KLSG) serves as a coordination point for ATP. The segment at 22–27 (GERGVG) is involved in allosteric activation by GTP. Residue Gly-56 coordinates UMP. Residues Gly-57 and Arg-61 each coordinate ATP. UMP contacts are provided by residues Asp-76 and 137 to 144 (IGSPYFST). Residues Asn-165, Tyr-171, and Asp-174 each coordinate ATP.

It belongs to the UMP kinase family. Homohexamer.

The protein resides in the cytoplasm. It carries out the reaction UMP + ATP = UDP + ADP. The protein operates within pyrimidine metabolism; CTP biosynthesis via de novo pathway; UDP from UMP (UMPK route): step 1/1. Allosterically activated by GTP. Inhibited by UTP, 5-bromo-UTP and 5-iodo-UTP. Catalyzes the reversible phosphorylation of UMP to UDP, with ATP as the most efficient phosphate donor. The chain is Uridylate kinase (pyrH) from Streptococcus pneumoniae serotype 4 (strain ATCC BAA-334 / TIGR4).